The primary structure comprises 162 residues: ATP synthase subunit delta, mitochondrial (162 aa).

Residues Met-1 to Tyr-24 constitute a mitochondrion transit peptide.

In terms of assembly, F-type ATP synthases have 2 components, the catalytic core F(1) and the membrane-embedded component F(0), linked together by a central stalk and a peripheral stalk. The central stalk, also called rotor shaft, is often seen as part of F(1). The peripheral stalk is seen as part of F(0). F(0) contains the membrane channel next to the rotor. F-type ATP synthases form dimers but each monomer functions independently in ATP generation. The dimer consists of 17 different polypeptides: ATP1 (subunit alpha, 3 molecules per monomer, part of F(1)), ATP2 (subunit beta, 3 copies per monomer, part of F(1)), ATP3 (subunit gamma, part of the central stalk), ATP4 (subunit b, part of the peripheral stalk), ATP5/OSCP (subunit 5/OSCP, part of the peripheral stalk), ATP6 (subunit a, part of the peripheral stalk), ATP7 (subunit d, part of the peripheral stalk), ATP8 (subunit 8, part of the peripheral stalk), OLI1 (subunit c, part of the rotor, 10 molecules per monomer), ATP14 (subunit h, part of the peripheral stalk), ATP15 (subunit epsilon, part of the central stalk), ATP16 (subunit delta, part of the central stalk), ATP17 (subunit f, part of the peripheral stalk), ATP18 (subunit i/j, part of the peripheral stalk), ATP19 (subunit k, dimer-specific, at interface between monomers), ATP20 (subunit g, at interface between monomers), TIM11 (subunit e, at interface between monomers).

Its subcellular location is the mitochondrion inner membrane. Its function is as follows. Mitochondrial membrane ATP synthase (F(1)F(0) ATP synthase or Complex V) produces ATP from ADP in the presence of a proton gradient across the membrane which is generated by electron transport complexes of the respiratory chain. F-type ATP synthases consist of two structural domains, F(1) - containing the extramembraneous catalytic core, and F(0) - containing the membrane proton channel, linked together by a central stalk and a peripheral stalk. During catalysis, ATP synthesis in the catalytic domain of F(1) is coupled via a rotary mechanism of the central stalk subunits to proton translocation. Part of the complex F(1) domain and the central stalk which is part of the complex rotary element. Rotation of the central stalk against the surrounding alpha/ATP1(3)beta/ATP2(3) subunits leads to hydrolysis of ATP in three separate catalytic sites on the beta/ATP2 subunits. The sequence is that of ATP synthase subunit delta, mitochondrial from Yarrowia lipolytica (strain CLIB 122 / E 150) (Yeast).